Here is a 387-residue protein sequence, read N- to C-terminus: RNA polymerase II elongation factor ELL3 (387 aa).

Disordered stretches follow at residues 127-148 (LTEG…EGHP) and 186-275 (LSNR…EEVP). A compositionally biased stretch (polar residues) spans 230-239 (SPLQGLSNQD). Ser240 bears the Phosphoserine mark. Acidic residues predominate over residues 240–251 (SPEEQDWGQDAD). The segment covering 257–271 (EQSLSVQSASESPSP) has biased composition (low complexity). The OCEL domain occupies 275–385 (PDYLLQYSTI…LILEFEEKNR (111 aa)).

The protein belongs to the ELL/occludin family. In terms of assembly, interacts with AFF4. Component of the super elongation complex (SEC), at least composed of EAF1, EAF2, CDK9, MLLT3/AF9, AFF (AFF1 or AFF4), the P-TEFb complex and ELL (ELL, ELL2 or ELL3). Component of the little elongation complex (LEC), at least composed of ELL (ELL, ELL2 or ELL3), ZC3H8, ICE1 and ICE2.

The protein localises to the nucleus. Its function is as follows. Enhancer-binding elongation factor that specifically binds enhancers in embryonic stem cells (ES cells), marks them, and is required for their future activation during stem cell specification. Elongation factor component of the super elongation complex (SEC), a complex required to increase the catalytic rate of RNA polymerase II transcription by suppressing transient pausing by the polymerase at multiple sites along the DNA. Component of the little elongation complex (LEC), a complex required to regulate small nuclear RNA (snRNA) gene transcription by RNA polymerase II and III. Does not only bind to enhancer regions of active genes, but also marks the enhancers that are in a poised or inactive state in ES cells and is required for establishing proper RNA polymerase II occupancy at developmentally regulated genes in a cohesin-dependent manner. Probably required for priming developmentally regulated genes for later recruitment of the super elongation complex (SEC), for transcriptional activation during differentiation. Required for recruitment of P-TEFb within SEC during differentiation. Probably preloaded on germ cell chromatin, suggesting that it may prime gene activation by marking enhancers as early as in the germ cells. Promoting epithelial-mesenchymal transition (EMT). In Rattus norvegicus (Rat), this protein is RNA polymerase II elongation factor ELL3 (Ell3).